The sequence spans 37 residues: GLFSILRGAAKFASKGLGKDLTKLGVDLVACKISKQC.

Cysteine 31 and cysteine 37 form a disulfide bridge.

In terms of tissue distribution, expressed by the skin glands.

The protein resides in the secreted. Antibacterial activity against Gram-positive bacterium S.aureus and Gram-negative bacterium E.coli. Has activity against C.albicans. This chain is Esculentin-2B, found in Lithobates berlandieri (Rio Grande leopard frog).